The chain runs to 401 residues: tRNA-specific 2-thiouridylase MnmA (401 aa).

Residues 13–20 (GLSGGVDS) and methionine 39 contribute to the ATP site. The interaction with target base in tRNA stretch occupies residues 99–101 (NPD). Residue cysteine 104 is the Nucleophile of the active site. A disulfide bridge links cysteine 104 with cysteine 202. ATP is bound at residue glycine 128. The tract at residues 152–154 (KDQ) is interaction with tRNA. Cysteine 202 functions as the Cysteine persulfide intermediate in the catalytic mechanism. Residues 329 to 330 (RY) form an interaction with tRNA region.

The protein belongs to the MnmA/TRMU family.

The protein localises to the cytoplasm. The catalysed reaction is S-sulfanyl-L-cysteinyl-[protein] + uridine(34) in tRNA + AH2 + ATP = 2-thiouridine(34) in tRNA + L-cysteinyl-[protein] + A + AMP + diphosphate + H(+). In terms of biological role, catalyzes the 2-thiolation of uridine at the wobble position (U34) of tRNA, leading to the formation of s(2)U34. The sequence is that of tRNA-specific 2-thiouridylase MnmA from Polaromonas sp. (strain JS666 / ATCC BAA-500).